The following is a 339-amino-acid chain: Foldase protein PrsA (339 aa).

The signal sequence occupies residues 1 to 26 (MKHLKNNTKKFTALLFALLFSMSIAG). Cys27 carries the N-palmitoyl cysteine lipid modification. A lipid anchor (S-diacylglycerol cysteine) is attached at Cys27. The PpiC domain maps to 197–287 (KPTFHAQHVL…FGYHVIKLID (91 aa)).

The protein belongs to the PrsA family.

The protein resides in the cell membrane. The catalysed reaction is [protein]-peptidylproline (omega=180) = [protein]-peptidylproline (omega=0). In terms of biological role, plays a major role in protein secretion by helping the post-translocational extracellular folding of several secreted proteins. The sequence is that of Foldase protein PrsA from Clostridium tetani (strain Massachusetts / E88).